The primary structure comprises 372 residues: tRNA pseudouridine synthase D (372 aa).

D85 acts as the Nucleophile in catalysis. The region spanning 160 to 330 (GFTNYFGYQR…MQGSRRFMWG (171 aa)) is the TRUD domain.

The protein belongs to the pseudouridine synthase TruD family.

It catalyses the reaction uridine(13) in tRNA = pseudouridine(13) in tRNA. Responsible for synthesis of pseudouridine from uracil-13 in transfer RNAs. In Campylobacter jejuni (strain RM1221), this protein is tRNA pseudouridine synthase D.